A 276-amino-acid polypeptide reads, in one-letter code: Undecaprenyl-diphosphatase (276 aa).

6 consecutive transmembrane segments (helical) span residues 43-63, 85-105, 109-129, 183-203, 218-238, and 254-274; these read RAMA…VWEF, LNLL…ADTI, LFNA…MLWA, AATE…AVYS, VFAI…RGLL, and IAFG…WASA.

The protein belongs to the UppP family.

The protein localises to the cell inner membrane. It carries out the reaction di-trans,octa-cis-undecaprenyl diphosphate + H2O = di-trans,octa-cis-undecaprenyl phosphate + phosphate + H(+). Its function is as follows. Catalyzes the dephosphorylation of undecaprenyl diphosphate (UPP). Confers resistance to bacitracin. The chain is Undecaprenyl-diphosphatase from Pseudomonas syringae pv. syringae (strain B728a).